A 137-amino-acid chain; its full sequence is Proofreading thioesterase EntH (137 aa).

The active-site Nucleophile or proton acceptor is the Glu-63.

This sequence belongs to the thioesterase PaaI family. In terms of assembly, homotetramer. Dimer of dimers. Interacts specifically with the aryl carrier protein (ArCP) domain of EntB.

It localises to the cytoplasm. It functions in the pathway siderophore biosynthesis; enterobactin biosynthesis. Its function is as follows. Required for optimal enterobactin synthesis. Acts as a proofreading enzyme that prevents EntB misacylation by hydrolyzing the thioester bound existing between EntB and wrongly charged molecules. The chain is Proofreading thioesterase EntH from Escherichia coli O6:H1 (strain CFT073 / ATCC 700928 / UPEC).